A 211-amino-acid polypeptide reads, in one-letter code: Flagellar calcium-binding protein (211 aa).

The disordered stretch occupies residues 1-29 (MGACGSKGSTSDKGLASDKDGKKAKDRKE). The span at 15–29 (LASDKDGKKAKDRKE) shows a compositional bias: basic and acidic residues. EF-hand domains follow at residues 45 to 80 (EAKQ…VLKL), 81 to 116 (DEFT…FVEF), 127 to 162 (YDFF…LEAW), and 164 to 199 (AKVE…VKLD). Ca(2+)-binding residues include D58, N60, T62, K64, and E69. Positions 140, 142, 144, 151, 177, 179, 181, 183, and 188 each coordinate Ca(2+).

Belongs to the calflagin family.

It is found in the cell projection. It localises to the cilium. The protein resides in the flagellum. Its function is as follows. May contribute to the rapid motility of the trypanosomes, playing a role either in flagellar structure or in calcium metabolism. Could alternate between a GDP-bound inactive form to a calcium/GTP-bound active form. This chain is Flagellar calcium-binding protein (FCABP), found in Trypanosoma cruzi.